The chain runs to 255 residues: tRNA pseudouridine synthase A (255 aa).

Catalysis depends on aspartate 52, which acts as the Nucleophile. Tyrosine 111 contributes to the substrate binding site.

The protein belongs to the tRNA pseudouridine synthase TruA family. In terms of assembly, homodimer.

The catalysed reaction is uridine(38/39/40) in tRNA = pseudouridine(38/39/40) in tRNA. In terms of biological role, formation of pseudouridine at positions 38, 39 and 40 in the anticodon stem and loop of transfer RNAs. This chain is tRNA pseudouridine synthase A, found in Nitrobacter winogradskyi (strain ATCC 25391 / DSM 10237 / CIP 104748 / NCIMB 11846 / Nb-255).